The primary structure comprises 295 residues: Protein PAR32 (295 aa).

Ala-2 carries the post-translational modification N-acetylalanine. A phosphoserine mark is found at Ser-36, Ser-39, Ser-47, Ser-123, Ser-138, Ser-141, and Ser-147. Residues 134-153 (SATRSHQSLHATTSSPNNNA) show a composition bias toward polar residues. 2 disordered regions span residues 134–156 (SATR…APIV) and 217–295 (TSKK…TMFN). Basic residues predominate over residues 217 to 227 (TSKKPKNKLKG). Ser-246 is subject to Phosphoserine. Residues 246–256 (SPKSSRNTINH) are compositionally biased toward polar residues. Residues 265–274 (KFNLKDDNGK) are compositionally biased toward basic and acidic residues. Positions 275 to 284 (EKKKKKKKKS) are enriched in basic residues. The segment covering 285-295 (GFFSSLKTMFN) has biased composition (low complexity).

Hyperphosphorylated after treatment with rapamycin in a TAP42-dependent manner.

The protein resides in the cytoplasm. Functionally, involved in resistance to cisplatin. The polypeptide is Protein PAR32 (PAR32) (Saccharomyces cerevisiae (strain ATCC 204508 / S288c) (Baker's yeast)).